The sequence spans 151 residues: Large ribosomal subunit protein bL9 (151 aa).

The protein belongs to the bacterial ribosomal protein bL9 family.

Binds to the 23S rRNA. In Acidobacterium capsulatum (strain ATCC 51196 / DSM 11244 / BCRC 80197 / JCM 7670 / NBRC 15755 / NCIMB 13165 / 161), this protein is Large ribosomal subunit protein bL9.